The sequence spans 511 residues: Cytochrome P450 71A6 (511 aa).

The next 2 helical transmembrane spans lie at 1 to 15 (ILIALLCTLPFLFFL) and 61 to 77 (VMQLHFGSVPVLVASSP). 3 N-linked (GlcNAc...) asparagine glycosylation sites follow: Asn-90, Asn-96, and Asn-167. Residue Cys-450 participates in heme binding.

Belongs to the cytochrome P450 family. Heme serves as cofactor.

The protein resides in the membrane. This is Cytochrome P450 71A6 (CYP71A6) from Nepeta racemosa (Catmint).